The chain runs to 764 residues: 1,4-alpha-glucan branching enzyme GlgB (764 aa).

Catalysis depends on D431, which acts as the Nucleophile. E484 serves as the catalytic Proton donor.

It belongs to the glycosyl hydrolase 13 family. GlgB subfamily. As to quaternary structure, monomer.

The enzyme catalyses Transfers a segment of a (1-&gt;4)-alpha-D-glucan chain to a primary hydroxy group in a similar glucan chain.. Its pathway is glycan biosynthesis; glycogen biosynthesis. Its function is as follows. Catalyzes the formation of the alpha-1,6-glucosidic linkages in glycogen by scission of a 1,4-alpha-linked oligosaccharide from growing alpha-1,4-glucan chains and the subsequent attachment of the oligosaccharide to the alpha-1,6 position. In Synechococcus sp. (strain CC9902), this protein is 1,4-alpha-glucan branching enzyme GlgB.